The primary structure comprises 211 residues: Urease accessory protein UreF (211 aa).

Residues 71-93 (DDADRETDARTPAPAARHASRSQ) form a disordered region.

Belongs to the UreF family. UreD, UreF and UreG form a complex that acts as a GTP-hydrolysis-dependent molecular chaperone, activating the urease apoprotein by helping to assemble the nickel containing metallocenter of UreC. The UreE protein probably delivers the nickel.

Its subcellular location is the cytoplasm. Functionally, required for maturation of urease via the functional incorporation of the urease nickel metallocenter. The chain is Urease accessory protein UreF from Mycobacterium tuberculosis (strain ATCC 25177 / H37Ra).